A 77-amino-acid chain; its full sequence is Acyl carrier protein (77 aa).

The Carrier domain occupies 1–76 (MENFDKVKDI…DAVKFINSLE (76 aa)). S36 carries the post-translational modification O-(pantetheine 4'-phosphoryl)serine.

It belongs to the acyl carrier protein (ACP) family. In terms of processing, 4'-phosphopantetheine is transferred from CoA to a specific serine of apo-ACP by AcpS. This modification is essential for activity because fatty acids are bound in thioester linkage to the sulfhydryl of the prosthetic group.

The protein resides in the cytoplasm. The protein operates within lipid metabolism; fatty acid biosynthesis. Carrier of the growing fatty acid chain in fatty acid biosynthesis. In Staphylococcus aureus (strain Mu3 / ATCC 700698), this protein is Acyl carrier protein.